The primary structure comprises 291 residues: Ribosomal RNA small subunit methyltransferase A (291 aa).

S-adenosyl-L-methionine is bound by residues His-21, Leu-23, Gly-48, Glu-70, Asp-95, and Asn-115.

Belongs to the class I-like SAM-binding methyltransferase superfamily. rRNA adenine N(6)-methyltransferase family. RsmA subfamily.

It localises to the cytoplasm. It catalyses the reaction adenosine(1518)/adenosine(1519) in 16S rRNA + 4 S-adenosyl-L-methionine = N(6)-dimethyladenosine(1518)/N(6)-dimethyladenosine(1519) in 16S rRNA + 4 S-adenosyl-L-homocysteine + 4 H(+). Specifically dimethylates two adjacent adenosines (A1518 and A1519) in the loop of a conserved hairpin near the 3'-end of 16S rRNA in the 30S particle. May play a critical role in biogenesis of 30S subunits. The sequence is that of Ribosomal RNA small subunit methyltransferase A from Prochlorococcus marinus (strain NATL1A).